A 1179-amino-acid polypeptide reads, in one-letter code: DNA-directed RNA polymerase subunit beta' (1179 aa).

Cys60, Cys62, Cys75, and Cys78 together coordinate Zn(2+). Mg(2+) contacts are provided by Asp449, Asp451, and Asp453. Cys796, Cys871, Cys878, and Cys881 together coordinate Zn(2+).

This sequence belongs to the RNA polymerase beta' chain family. The RNAP catalytic core consists of 2 alpha, 1 beta, 1 beta' and 1 omega subunit. When a sigma factor is associated with the core the holoenzyme is formed, which can initiate transcription. Mg(2+) serves as cofactor. Requires Zn(2+) as cofactor.

The catalysed reaction is RNA(n) + a ribonucleoside 5'-triphosphate = RNA(n+1) + diphosphate. DNA-dependent RNA polymerase catalyzes the transcription of DNA into RNA using the four ribonucleoside triphosphates as substrates. The chain is DNA-directed RNA polymerase subunit beta' from Symbiobacterium thermophilum (strain DSM 24528 / JCM 14929 / IAM 14863 / T).